The primary structure comprises 160 residues: Transcription elongation factor GreA (160 aa).

The stretch at 53-73 forms a coiled coil; sequence AREEQGMVEARIRDIEGRLQN.

The protein belongs to the GreA/GreB family.

In terms of biological role, necessary for efficient RNA polymerase transcription elongation past template-encoded arresting sites. The arresting sites in DNA have the property of trapping a certain fraction of elongating RNA polymerases that pass through, resulting in locked ternary complexes. Cleavage of the nascent transcript by cleavage factors such as GreA or GreB allows the resumption of elongation from the new 3'terminus. GreA releases sequences of 2 to 3 nucleotides. The chain is Transcription elongation factor GreA from Pseudomonas putida (strain ATCC 47054 / DSM 6125 / CFBP 8728 / NCIMB 11950 / KT2440).